The primary structure comprises 262 residues: Type III pantothenate kinase (262 aa).

Residue 10 to 17 participates in ATP binding; sequence DIGNTTTV. A substrate-binding site is contributed by 110–113; that stretch reads GADR. The Proton acceptor role is filled by aspartate 112. Residue aspartate 134 coordinates K(+). Residue threonine 137 coordinates ATP. Threonine 189 is a substrate binding site.

This sequence belongs to the type III pantothenate kinase family. In terms of assembly, homodimer. The cofactor is NH4(+). K(+) serves as cofactor.

The protein localises to the cytoplasm. It carries out the reaction (R)-pantothenate + ATP = (R)-4'-phosphopantothenate + ADP + H(+). It participates in cofactor biosynthesis; coenzyme A biosynthesis; CoA from (R)-pantothenate: step 1/5. Catalyzes the phosphorylation of pantothenate (Pan), the first step in CoA biosynthesis. The sequence is that of Type III pantothenate kinase from Deinococcus radiodurans (strain ATCC 13939 / DSM 20539 / JCM 16871 / CCUG 27074 / LMG 4051 / NBRC 15346 / NCIMB 9279 / VKM B-1422 / R1).